Here is a 398-residue protein sequence, read N- to C-terminus: 1-deoxy-D-xylulose 5-phosphate reductoisomerase (398 aa).

Threonine 10, glycine 11, serine 12, isoleucine 13, glycine 36, asparagine 38, and asparagine 124 together coordinate NADPH. A 1-deoxy-D-xylulose 5-phosphate-binding site is contributed by lysine 125. Position 126 (glutamate 126) interacts with NADPH. Position 150 (aspartate 150) interacts with Mn(2+). Residues serine 151, glutamate 152, serine 186, and histidine 209 each contribute to the 1-deoxy-D-xylulose 5-phosphate site. Glutamate 152 provides a ligand contact to Mn(2+). NADPH is bound at residue glycine 215. Positions 222, 227, 228, and 231 each coordinate 1-deoxy-D-xylulose 5-phosphate. A Mn(2+)-binding site is contributed by glutamate 231.

It belongs to the DXR family. In terms of assembly, homodimer. It depends on Mg(2+) as a cofactor. Requires Mn(2+) as cofactor.

The catalysed reaction is 2-C-methyl-D-erythritol 4-phosphate + NADP(+) = 1-deoxy-D-xylulose 5-phosphate + NADPH + H(+). It functions in the pathway isoprenoid biosynthesis; isopentenyl diphosphate biosynthesis via DXP pathway; isopentenyl diphosphate from 1-deoxy-D-xylulose 5-phosphate: step 1/6. Its function is as follows. Catalyzes the NADPH-dependent rearrangement and reduction of 1-deoxy-D-xylulose-5-phosphate (DXP) to 2-C-methyl-D-erythritol 4-phosphate (MEP). In Pectobacterium atrosepticum (strain SCRI 1043 / ATCC BAA-672) (Erwinia carotovora subsp. atroseptica), this protein is 1-deoxy-D-xylulose 5-phosphate reductoisomerase.